The following is a 400-amino-acid chain: tRNA(Met) cytidine acetate ligase (400 aa).

Residues 7–20 (ITEY…HIYH), glycine 102, asparagine 165, and arginine 190 each bind ATP.

This sequence belongs to the TmcAL family.

The protein localises to the cytoplasm. It carries out the reaction cytidine(34) in elongator tRNA(Met) + acetate + ATP = N(4)-acetylcytidine(34) in elongator tRNA(Met) + AMP + diphosphate. Catalyzes the formation of N(4)-acetylcytidine (ac(4)C) at the wobble position of elongator tRNA(Met), using acetate and ATP as substrates. First activates an acetate ion to form acetyladenylate (Ac-AMP) and then transfers the acetyl group to tRNA to form ac(4)C34. The polypeptide is tRNA(Met) cytidine acetate ligase (Clostridium novyi (strain NT)).